The chain runs to 159 residues: Ribosomal RNA large subunit methyltransferase H (159 aa).

Residues leucine 76, glycine 108, and 127–132 contribute to the S-adenosyl-L-methionine site; that span reads FGRMTL.

Belongs to the RNA methyltransferase RlmH family. In terms of assembly, homodimer.

Its subcellular location is the cytoplasm. It carries out the reaction pseudouridine(1915) in 23S rRNA + S-adenosyl-L-methionine = N(3)-methylpseudouridine(1915) in 23S rRNA + S-adenosyl-L-homocysteine + H(+). Functionally, specifically methylates the pseudouridine at position 1915 (m3Psi1915) in 23S rRNA. The protein is Ribosomal RNA large subunit methyltransferase H of Lactococcus lactis subsp. cremoris (strain SK11).